Reading from the N-terminus, the 500-residue chain is NAD(P)H-quinone oxidoreductase chain 4, chloroplastic (500 aa).

15 consecutive transmembrane segments (helical) span residues 4-24 (FPWL…IFFL), 35-55 (YTIF…CYHF), 87-107 (IGPI…AWPV), 113-130 (LFNF…GLFS), 134-154 (LLLF…LLSM), 167-187 (FILY…GIGL), 211-231 (IIFY…IPLH), 242-262 (HYST…YGLV), 272-292 (AHSI…IYAA), 305-325 (IAYS…SITD), 330-350 (GALL…FLAG), 364-384 (MGGI…FSMA), 386-406 (LALP…GIIT), 416-436 (ILIT…SLSM), and 463-483 (FLSI…DFIF).

This sequence belongs to the complex I subunit 4 family.

Its subcellular location is the plastid. The protein resides in the chloroplast thylakoid membrane. It carries out the reaction a plastoquinone + NADH + (n+1) H(+)(in) = a plastoquinol + NAD(+) + n H(+)(out). The catalysed reaction is a plastoquinone + NADPH + (n+1) H(+)(in) = a plastoquinol + NADP(+) + n H(+)(out). The polypeptide is NAD(P)H-quinone oxidoreductase chain 4, chloroplastic (Coffea arabica (Arabian coffee)).